Consider the following 292-residue polypeptide: 4-hydroxy-tetrahydrodipicolinate synthase (292 aa).

Thr44 is a pyruvate binding site. The Proton donor/acceptor role is filled by Tyr132. Lys161 serves as the catalytic Schiff-base intermediate with substrate. Ile203 is a pyruvate binding site.

It belongs to the DapA family. In terms of assembly, homotetramer; dimer of dimers.

The protein resides in the cytoplasm. The enzyme catalyses L-aspartate 4-semialdehyde + pyruvate = (2S,4S)-4-hydroxy-2,3,4,5-tetrahydrodipicolinate + H2O + H(+). The protein operates within amino-acid biosynthesis; L-lysine biosynthesis via DAP pathway; (S)-tetrahydrodipicolinate from L-aspartate: step 3/4. In terms of biological role, catalyzes the condensation of (S)-aspartate-beta-semialdehyde [(S)-ASA] and pyruvate to 4-hydroxy-tetrahydrodipicolinate (HTPA). In Fervidobacterium nodosum (strain ATCC 35602 / DSM 5306 / Rt17-B1), this protein is 4-hydroxy-tetrahydrodipicolinate synthase.